Consider the following 505-residue polypeptide: Acetyl-coenzyme A carboxylase carboxyl transferase subunit beta, chloroplastic (505 aa).

Low complexity predominate over residues Glu189 to Gly205. A disordered region spans residues Glu189 to Arg213. A CoA carboxyltransferase N-terminal domain is found at Leu228–Ser499. Zn(2+) contacts are provided by Cys232, Cys235, Cys251, and Cys254. The C4-type zinc finger occupies Cys232–Cys254.

This sequence belongs to the AccD/PCCB family. In terms of assembly, acetyl-CoA carboxylase is a heterohexamer composed of biotin carboxyl carrier protein, biotin carboxylase and 2 subunits each of ACCase subunit alpha and ACCase plastid-coded subunit beta (accD). Zn(2+) is required as a cofactor.

It is found in the plastid. Its subcellular location is the chloroplast stroma. It catalyses the reaction N(6)-carboxybiotinyl-L-lysyl-[protein] + acetyl-CoA = N(6)-biotinyl-L-lysyl-[protein] + malonyl-CoA. The protein operates within lipid metabolism; malonyl-CoA biosynthesis; malonyl-CoA from acetyl-CoA: step 1/1. Its function is as follows. Component of the acetyl coenzyme A carboxylase (ACC) complex. Biotin carboxylase (BC) catalyzes the carboxylation of biotin on its carrier protein (BCCP) and then the CO(2) group is transferred by the transcarboxylase to acetyl-CoA to form malonyl-CoA. This is Acetyl-coenzyme A carboxylase carboxyl transferase subunit beta, chloroplastic from Calycanthus floridus var. glaucus (Eastern sweetshrub).